Consider the following 544-residue polypeptide: Putative cysteine ligase BshC (544 aa).

Positions Leu431 to Asn463 form a coiled coil.

This sequence belongs to the BshC family.

Involved in bacillithiol (BSH) biosynthesis. May catalyze the last step of the pathway, the addition of cysteine to glucosamine malate (GlcN-Mal) to generate BSH. This Natranaerobius thermophilus (strain ATCC BAA-1301 / DSM 18059 / JW/NM-WN-LF) protein is Putative cysteine ligase BshC.